A 277-amino-acid chain; its full sequence is Glutamate racemase (277 aa).

Residues 13 to 14 (DS) and 45 to 46 (YG) contribute to the substrate site. Cys-76 functions as the Proton donor/acceptor in the catalytic mechanism. 77 to 78 (NT) lines the substrate pocket. Cys-186 acts as the Proton donor/acceptor in catalysis. 187–188 (TH) serves as a coordination point for substrate.

Belongs to the aspartate/glutamate racemases family.

It catalyses the reaction L-glutamate = D-glutamate. It participates in cell wall biogenesis; peptidoglycan biosynthesis. Its function is as follows. Provides the (R)-glutamate required for cell wall biosynthesis. The protein is Glutamate racemase of Ralstonia nicotianae (strain ATCC BAA-1114 / GMI1000) (Ralstonia solanacearum).